We begin with the raw amino-acid sequence, 379 residues long: Alcohol dehydrogenase 1 (379 aa).

Positions 47, 49, 69, 99, 102, 105, 113, and 177 each coordinate Zn(2+). An alcohol contacts are provided by threonine 49 and histidine 69. Threonine 49 contributes to the NAD(+) binding site. Residues 202-207, aspartate 226, arginine 231, threonine 272, valine 295, 295-297, phenylalanine 322, and arginine 372 contribute to the NAD(+) site; these read GLGAVG and VGV.

Belongs to the zinc-containing alcohol dehydrogenase family. In terms of assembly, homodimer. It depends on Zn(2+) as a cofactor.

The protein localises to the cytoplasm. The catalysed reaction is a primary alcohol + NAD(+) = an aldehyde + NADH + H(+). It carries out the reaction a secondary alcohol + NAD(+) = a ketone + NADH + H(+). The polypeptide is Alcohol dehydrogenase 1 (ADH1) (Hordeum vulgare (Barley)).